We begin with the raw amino-acid sequence, 489 residues long: Ataxin-10 homolog (489 aa).

Belongs to the ataxin-10 family.

The protein resides in the cytoplasm. May play a role in the regulation of cytokinesis. The polypeptide is Ataxin-10 homolog (CTR86) (Debaryomyces hansenii (strain ATCC 36239 / CBS 767 / BCRC 21394 / JCM 1990 / NBRC 0083 / IGC 2968) (Yeast)).